A 383-amino-acid chain; its full sequence is L-lactate dehydrogenase (383 aa).

The FMN hydroxy acid dehydrogenase domain maps to 1 to 380; the sequence is MIIASTFDYR…TCESLVNTDA (380 aa). Tyrosine 24 is a substrate binding site. FMN-binding residues include serine 106 and glutamine 127. Tyrosine 129 lines the substrate pocket. Threonine 155 is an FMN binding site. Arginine 164 lines the substrate pocket. Residue lysine 251 coordinates FMN. The active-site Proton acceptor is histidine 275. Substrate is bound at residue arginine 278. Residue 306 to 330 participates in FMN binding; sequence DSGVRSGLDVVRMIAQGADAVMIGR.

It belongs to the FMN-dependent alpha-hydroxy acid dehydrogenase family. FMN is required as a cofactor.

The protein localises to the cell inner membrane. It carries out the reaction (S)-lactate + A = pyruvate + AH2. Catalyzes the conversion of L-lactate to pyruvate. Is coupled to the respiratory chain. The polypeptide is L-lactate dehydrogenase (Bartonella tribocorum (strain CIP 105476 / IBS 506)).